Consider the following 71-residue polypeptide: UPF0346 protein SMU_1621c (71 aa).

Belongs to the UPF0346 family.

This Streptococcus mutans serotype c (strain ATCC 700610 / UA159) protein is UPF0346 protein SMU_1621c.